Here is a 161-residue protein sequence, read N- to C-terminus: MQDAITAVINAADVQGKYLDNNSIEKLRSYFQTGELRVRAAASISANAAGIIKEAVAKSLLYSDITRPGGNMYTTRRYAACIRDLDYYLRYATYSMLAGDPSILDERVLNGLKETYNSLGVPIGATIQSIQAMKEVTASLVGPDAGQEMGVYFDYICSGLS.

N4-methylasparagine is present on asparagine 71. Residue cysteine 81 coordinates (2R,3E)-phycocyanobilin.

The protein belongs to the phycobiliprotein family. In terms of assembly, heterodimer of an alpha and a beta chain. In terms of processing, contains one covalently linked phycocyanobilin chromophore.

The protein resides in the plastid. It localises to the chloroplast thylakoid membrane. Functionally, light-harvesting photosynthetic bile pigment-protein from the phycobiliprotein complex. Allophycocyanin has a maximum absorption at approximately 650 nanometers. The protein is Allophycocyanin beta chain (apcB) of Cyanidium caldarium (Red alga).